The chain runs to 156 residues: 6,7-dimethyl-8-ribityllumazine synthase (156 aa).

Residues phenylalanine 22, 57 to 59 (AYE), and 81 to 83 (TVI) each bind 5-amino-6-(D-ribitylamino)uracil. 86-87 (GT) is a (2S)-2-hydroxy-3-oxobutyl phosphate binding site. Catalysis depends on histidine 89, which acts as the Proton donor. A 5-amino-6-(D-ribitylamino)uracil-binding site is contributed by phenylalanine 114. A (2S)-2-hydroxy-3-oxobutyl phosphate-binding site is contributed by arginine 128.

Belongs to the DMRL synthase family. In terms of assembly, forms an icosahedral capsid composed of 60 subunits, arranged as a dodecamer of pentamers.

It catalyses the reaction (2S)-2-hydroxy-3-oxobutyl phosphate + 5-amino-6-(D-ribitylamino)uracil = 6,7-dimethyl-8-(1-D-ribityl)lumazine + phosphate + 2 H2O + H(+). Its pathway is cofactor biosynthesis; riboflavin biosynthesis; riboflavin from 2-hydroxy-3-oxobutyl phosphate and 5-amino-6-(D-ribitylamino)uracil: step 1/2. In terms of biological role, catalyzes the formation of 6,7-dimethyl-8-ribityllumazine by condensation of 5-amino-6-(D-ribitylamino)uracil with 3,4-dihydroxy-2-butanone 4-phosphate. This is the penultimate step in the biosynthesis of riboflavin. The polypeptide is 6,7-dimethyl-8-ribityllumazine synthase (Edwardsiella ictaluri (strain 93-146)).